We begin with the raw amino-acid sequence, 342 residues long: Pre-mRNA-splicing factor 18 (342 aa).

It belongs to the PRP18 family. In terms of assembly, interacts with the spliceosome. Part of a complex containing U4/U6 snRNPs.

It localises to the nucleus speckle. Its function is as follows. Participates in the second step of pre-mRNA splicing. The polypeptide is Pre-mRNA-splicing factor 18 (prpf18) (Xenopus laevis (African clawed frog)).